Here is a 214-residue protein sequence, read N- to C-terminus: tRNA (guanine-N(7)-)-methyltransferase (214 aa).

Residues Glu44, Asp69, Asp96, and Asp118 each contribute to the S-adenosyl-L-methionine site. The active site involves Asp118. Residue Lys122 coordinates substrate. Residues 124 to 129 (KHEKRR) form an interaction with RNA region. Residues Asp154 and 191–194 (TEYE) contribute to the substrate site.

It belongs to the class I-like SAM-binding methyltransferase superfamily. TrmB family.

The catalysed reaction is guanosine(46) in tRNA + S-adenosyl-L-methionine = N(7)-methylguanosine(46) in tRNA + S-adenosyl-L-homocysteine. The protein operates within tRNA modification; N(7)-methylguanine-tRNA biosynthesis. Its function is as follows. Catalyzes the formation of N(7)-methylguanine at position 46 (m7G46) in tRNA. The chain is tRNA (guanine-N(7)-)-methyltransferase from Enterococcus faecalis (strain ATCC 700802 / V583).